We begin with the raw amino-acid sequence, 256 residues long: Imidazole glycerol phosphate synthase subunit HisF (256 aa).

Residues aspartate 12 and aspartate 131 contribute to the active site.

This sequence belongs to the HisA/HisF family. Heterodimer of HisH and HisF.

It localises to the cytoplasm. The catalysed reaction is 5-[(5-phospho-1-deoxy-D-ribulos-1-ylimino)methylamino]-1-(5-phospho-beta-D-ribosyl)imidazole-4-carboxamide + L-glutamine = D-erythro-1-(imidazol-4-yl)glycerol 3-phosphate + 5-amino-1-(5-phospho-beta-D-ribosyl)imidazole-4-carboxamide + L-glutamate + H(+). It functions in the pathway amino-acid biosynthesis; L-histidine biosynthesis; L-histidine from 5-phospho-alpha-D-ribose 1-diphosphate: step 5/9. IGPS catalyzes the conversion of PRFAR and glutamine to IGP, AICAR and glutamate. The HisF subunit catalyzes the cyclization activity that produces IGP and AICAR from PRFAR using the ammonia provided by the HisH subunit. The protein is Imidazole glycerol phosphate synthase subunit HisF of Pseudomonas fluorescens (strain ATCC BAA-477 / NRRL B-23932 / Pf-5).